The chain runs to 2434 residues: ATP-binding cassette sub-family A member 2 (2434 aa).

The N-linked (GlcNAc...) asparagine glycan is linked to Asn14. Helical transmembrane passes span Pro22–Leu42 and Ala54–Cys74. N-linked (GlcNAc...) asparagine glycans are attached at residues Asn89, Asn168, and Asn173. The residue at position 271 (Gln271) is an N5-methylglutamine. N-linked (GlcNAc...) asparagine glycans are attached at residues Asn305, Asn368, Asn379, Asn420, Asn432, Asn476, Asn484, Asn494, Asn530, Asn549, Asn590, Asn600, and Asn628. A compositionally biased stretch (low complexity) spans Arg354–Ser369. Residues Arg354–Asp396 form a disordered region. The span at Thr370–Asp396 shows a compositional bias: polar residues. Transmembrane regions (helical) follow at residues Phe699–Val719, Val750–Ile770, Val782–Leu802, Ala813–Ile833, Ala857–Trp877, and Leu893–Ile913. An ABC transporter 1 domain is found at Val990 to Val1221. ATP is bound at residue Gly1024–Thr1031. The tract at residues Ala1225–Ser1246 is disordered. The span at Gly1228 to Ser1246 shows a compositional bias: polar residues. Phosphoserine is present on Ser1238. Asn1247 carries N-linked (GlcNAc...) asparagine glycosylation. 2 positions are modified to phosphoserine: Ser1327 and Ser1331. Residues Ile1461–Ile1481 traverse the membrane as a helical segment. Asn1496, Asn1549, and Asn1557 each carry an N-linked (GlcNAc...) asparagine glycan. The tract at residues Asn1587–Glu1606 is disordered. The segment covering Val1589–Ser1598 has biased composition (pro residues). N-linked (GlcNAc...) asparagine glycans are attached at residues Asn1613, Asn1678, and Asn1776. Helical transmembrane passes span Val1793–Phe1813, Val1842–Phe1862, Phe1873–Pro1893, Val1906–Leu1926, and Gly1992–Tyr2012. Residues Val2051–Arg2286 form the ABC transporter 2 domain. The N-linked (GlcNAc...) asparagine glycan is linked to Asn2055. Residue Gly2088–Thr2095 participates in ATP binding. At Thr2411 the chain carries Phosphothreonine.

Belongs to the ABC transporter superfamily. ABCA family. In terms of processing, N-glycosylated. Post-translationally, methylated at Gln-271 by N6AMT1. As to expression, expressed at high levels in brain, at moderate levels in heart, kidney and lung, and at low levels in skeletal muscle, stomach, spleen, colon and pancreas. Not detected in the liver or small intestine. In brain, highly expressed in white matter and detected in oligodendrocytes. Expressed in cerebellum as well as the anterior commissure. Expressed mainly in the white matter but is also scattered in gray matter throughout the whole brain. Expressed in myelinating cells of both ventral and dorsal restricted regions in newborn spinal cord. Expressed in non-myelin-forming as well as in myelin-forming Schwann cells in the sciatic nerve.

Its subcellular location is the endosome membrane. It is found in the lysosome membrane. In terms of biological role, probable transporter, its natural substrate has not been found yet. May have a role in macrophage lipid metabolism and neural development. May play a role in myelination, perhaps as a transporter for certain kinds of myelin chemical components. May play an important role in gamma-secretase processing of APP and thus in amyloid-beta peptide generation. Regulates esterification of plasma membrane cholesterol by modulation of sphingolipid metabolism. Functionally, probable lipid transporter that modulates cholesterol sequestration in the late endosome/lysosome by regulating the intracellular sphingolipid metabolism, in turn participates in cholesterol homeostasis. May alter the transbilayer distribution of ceramide in the intraluminal membrane lipid bilayer, favoring its retention in the outer leaflet that results in increased acid ceramidase activity in the late endosome/lysosome, facilitating ceramide deacylation to sphingosine leading to the sequestration of free cholesterol in lysosomes. In addition regulates amyloid-beta production either by activating a signaling pathway that regulates amyloid precursor protein transcription through the modulation of sphingolipid metabolism or through its role in gamma-secretase processing of APP. May play a role in myelin formation. The protein is ATP-binding cassette sub-family A member 2 of Rattus norvegicus (Rat).